Consider the following 95-residue polypeptide: Aspartyl/glutamyl-tRNA(Asn/Gln) amidotransferase subunit C (95 aa).

This sequence belongs to the GatC family. As to quaternary structure, heterotrimer of A, B and C subunits.

It carries out the reaction L-glutamyl-tRNA(Gln) + L-glutamine + ATP + H2O = L-glutaminyl-tRNA(Gln) + L-glutamate + ADP + phosphate + H(+). The enzyme catalyses L-aspartyl-tRNA(Asn) + L-glutamine + ATP + H2O = L-asparaginyl-tRNA(Asn) + L-glutamate + ADP + phosphate + 2 H(+). Functionally, allows the formation of correctly charged Asn-tRNA(Asn) or Gln-tRNA(Gln) through the transamidation of misacylated Asp-tRNA(Asn) or Glu-tRNA(Gln) in organisms which lack either or both of asparaginyl-tRNA or glutaminyl-tRNA synthetases. The reaction takes place in the presence of glutamine and ATP through an activated phospho-Asp-tRNA(Asn) or phospho-Glu-tRNA(Gln). The sequence is that of Aspartyl/glutamyl-tRNA(Asn/Gln) amidotransferase subunit C from Rhodopseudomonas palustris (strain BisB5).